Here is a 344-residue protein sequence, read N- to C-terminus: DNA-directed RNA polymerase subunit alpha (344 aa).

An alpha N-terminal domain (alpha-NTD) region spans residues 1–246 (MLVEKFLKDF…EFLFPLVDFE (246 aa)). The alpha C-terminal domain (alpha-CTD) stretch occupies residues 259 to 344 (ESSNLLDMSI…VLSKNVKISE (86 aa)).

This sequence belongs to the RNA polymerase alpha chain family. Homodimer. The RNAP catalytic core consists of 2 alpha, 1 beta, 1 beta' and 1 omega subunit. When a sigma factor is associated with the core the holoenzyme is formed, which can initiate transcription.

The enzyme catalyses RNA(n) + a ribonucleoside 5'-triphosphate = RNA(n+1) + diphosphate. Functionally, DNA-dependent RNA polymerase catalyzes the transcription of DNA into RNA using the four ribonucleoside triphosphates as substrates. This is DNA-directed RNA polymerase subunit alpha from Borreliella burgdorferi (strain ATCC 35210 / DSM 4680 / CIP 102532 / B31) (Borrelia burgdorferi).